The sequence spans 93 residues: Pyrimidine/purine nucleoside phosphorylase (93 aa).

It belongs to the nucleoside phosphorylase PpnP family.

The catalysed reaction is a purine D-ribonucleoside + phosphate = a purine nucleobase + alpha-D-ribose 1-phosphate. The enzyme catalyses adenosine + phosphate = alpha-D-ribose 1-phosphate + adenine. It carries out the reaction cytidine + phosphate = cytosine + alpha-D-ribose 1-phosphate. It catalyses the reaction guanosine + phosphate = alpha-D-ribose 1-phosphate + guanine. The catalysed reaction is inosine + phosphate = alpha-D-ribose 1-phosphate + hypoxanthine. The enzyme catalyses thymidine + phosphate = 2-deoxy-alpha-D-ribose 1-phosphate + thymine. It carries out the reaction uridine + phosphate = alpha-D-ribose 1-phosphate + uracil. It catalyses the reaction xanthosine + phosphate = alpha-D-ribose 1-phosphate + xanthine. In terms of biological role, catalyzes the phosphorolysis of diverse nucleosides, yielding D-ribose 1-phosphate and the respective free bases. Can use uridine, adenosine, guanosine, cytidine, thymidine, inosine and xanthosine as substrates. Also catalyzes the reverse reactions. The protein is Pyrimidine/purine nucleoside phosphorylase of Shewanella halifaxensis (strain HAW-EB4).